Here is a 234-residue protein sequence, read N- to C-terminus: Probable pectate lyase F (234 aa).

The N-terminal stretch at 1 to 17 (MRSTAAVLSILLPGALA) is a signal peptide. N-linked (GlcNAc...) asparagine glycosylation is present at N168.

It belongs to the polysaccharide lyase 3 family. Ca(2+) is required as a cofactor.

The protein resides in the secreted. The enzyme catalyses Eliminative cleavage of (1-&gt;4)-alpha-D-galacturonan to give oligosaccharides with 4-deoxy-alpha-D-galact-4-enuronosyl groups at their non-reducing ends.. Functionally, pectinolytic enzyme consist of four classes of enzymes: pectin lyase, polygalacturonase, pectin methylesterase and rhamnogalacturonase. Among pectinolytic enzymes, pectin lyase is the most important in depolymerization of pectin, since it cleaves internal glycosidic bonds of highly methylated pectins. Favors pectate, the anion, over pectin, the methyl ester. In Aspergillus terreus (strain NIH 2624 / FGSC A1156), this protein is Probable pectate lyase F (plyF).